Reading from the N-terminus, the 391-residue chain is MIRRSAVSRVVAEGSAIASDSGFALGASQYDAVVLLSFGGPEGPEDVVPFLKKVTSGRGVPDERLYEVAEHYNHFSGISPINDCNRRLRGALEKELFSRGIRIPVLWANRNWQPQLEEVLREAYDRGFRAFLTLFTSAYSCYSSCRQYREDIAHAVERAGLSGRIIVDKLRQFFDHPGFVLPFIEGIQDCLEQVKERGFKVSRTAILFSTHSIPELDAAFSGPEDAHFGKYGAYVSQHKAVVEVIMSRLRVTDPDLQNYQLVYQSRSGDPSTPWLEPDINDAIRVLRGCEAVLIVPLGFISDHMEVLWDLDNESMQTARECGLFAIRTPTPGTHPLYISGMVDLIVERLEGVPRSARPAMTDLGPWFDVCQPGCCKNSRSGFKPAYGGVAP.

Positions 79 and 148 each coordinate Fe-coproporphyrin III. 2 residues coordinate Fe(2+): His-211 and Glu-305.

This sequence belongs to the ferrochelatase family.

It localises to the cytoplasm. It carries out the reaction Fe-coproporphyrin III + 2 H(+) = coproporphyrin III + Fe(2+). The protein operates within porphyrin-containing compound metabolism; protoheme biosynthesis. Functionally, involved in coproporphyrin-dependent heme b biosynthesis. Catalyzes the insertion of ferrous iron into coproporphyrin III to form Fe-coproporphyrin III. This chain is Coproporphyrin III ferrochelatase, found in Tropheryma whipplei (strain TW08/27) (Whipple's bacillus).